Reading from the N-terminus, the 136-residue chain is Protein NrdI (136 aa).

The protein belongs to the NrdI family.

Its function is as follows. Probably involved in ribonucleotide reductase function. This Salmonella arizonae (strain ATCC BAA-731 / CDC346-86 / RSK2980) protein is Protein NrdI.